A 2323-amino-acid chain; its full sequence is C2 domain-containing protein 3 (2323 aa).

6 disordered regions span residues 1–27, 193–215, 402–426, 444–509, 537–556, and 698–745; these read MKQR…SPST, RELR…SCRG, WNGL…DLND, SDVG…HTPA, PDSP…PPKP, and KLSS…TKKT. Residues 200–209 are compositionally biased toward polar residues; sequence ESSNTQSMIP. S453 carries the post-translational modification Phosphoserine. A compositionally biased stretch (basic and acidic residues) spans 474–483; sequence KVVESKEQKQ. The 160-residue stretch at 504 to 663 folds into the C2 1 domain; the sequence is PGHTPAMSLS…IQSELLSFSS (160 aa). Polar residues predominate over residues 698–735; that stretch reads KLSSSTQPAPVSAATSSDTILPETGQDTACTRNPQSSN. S713 is modified (phosphoserine). C2 domains are found at residues 771-903, 969-1131, 1155-1323, and 1383-1517; these read SCNL…SRLL, QPPV…YRED, SSGF…TGWY, and KEEE…TLTI. Residues 1550–1574 are compositionally biased toward basic and acidic residues; the sequence is EPARELDSMDCSSHSESEQHPRKSD. 2 disordered regions span residues 1550–1599 and 1798–1824; these read EPAR…NSAA and LAHT…AARH. Residues 1584–1599 show a composition bias toward polar residues; it reads LQTSPTSTQVHGNSAA. A C2 6 domain is found at 1598–1726; that stretch reads AAAQVCPAQE…SGFQFICGWY (129 aa). Position 1871 is a phosphoserine (S1871). Disordered stretches follow at residues 1891–1918, 1952–2013, 2074–2163, 2182–2231, and 2261–2323; these read FSSQ…GRQD, ALTS…GGML, SEVL…SVGW, SEAF…EVST, and SHSP…TEET. The span at 1892-1904 shows a compositional bias: low complexity; that stretch reads SSQSSPAVSQSQE. 2 stretches are compositionally biased toward polar residues: residues 1952–1965 and 2074–2083; these read ALTS…SRAV and SEVLSPQPTE. Low complexity predominate over residues 2110–2125; sequence AVSPQPAQGSPSQSGV. The segment covering 2147–2158 has biased composition (polar residues); that stretch reads PSLTFSEAQEGS. Low complexity predominate over residues 2182 to 2197; the sequence is SEAFSSEFSDSSESFE. The span at 2207 to 2216 shows a compositional bias: basic and acidic residues; it reads SKREDYKDSP. A compositionally biased stretch (polar residues) spans 2222 to 2231; sequence QVPTGSEVST.

Interacts with OFD1; OFD1 may act as a negative regulator of C2CD3. Associates with the BBSome complex. Interacts with IFT88, BBS4 and PCM1.

It localises to the cytoplasm. The protein localises to the cytoskeleton. It is found in the cilium basal body. Its subcellular location is the microtubule organizing center. The protein resides in the centrosome. It localises to the centriole. Component of the centrioles that acts as a positive regulator of centriole elongation. Promotes assembly of centriolar distal appendage, a structure at the distal end of the mother centriole that acts as an anchor of the cilium, and is required for recruitment of centriolar distal appendages proteins CEP83, SCLT1, CEP89, FBF1 and CEP164. Not required for centriolar satellite integrity or RAB8 activation. Required for primary cilium formation. Required for sonic hedgehog/SHH signaling and for proteolytic processing of GLI3. This Mus musculus (Mouse) protein is C2 domain-containing protein 3 (C2cd3).